Reading from the N-terminus, the 457-residue chain is Bifunctional protein GlmU (457 aa).

A pyrophosphorylase region spans residues 1-229 (MSNSAKSVVI…LSEMEGVNNR (229 aa)). UDP-N-acetyl-alpha-D-glucosamine-binding positions include 11–14 (LAAG), K25, Q76, 81–82 (GT), 103–105 (YGD), G140, E154, N169, and N227. D105 is a Mg(2+) binding site. N227 lines the Mg(2+) pocket. The segment at 230–250 (LQLSALERIYQSEQAEQLLLA) is linker. The interval 251–457 (GVMLLDPARF…GWKRPVKEKK (207 aa)) is N-acetyltransferase. UDP-N-acetyl-alpha-D-glucosamine-binding residues include R333 and K351. The Proton acceptor role is filled by H363. Y366 and N377 together coordinate UDP-N-acetyl-alpha-D-glucosamine. Acetyl-CoA-binding positions include A380, 386-387 (NY), S405, A423, and R440.

The protein in the N-terminal section; belongs to the N-acetylglucosamine-1-phosphate uridyltransferase family. In the C-terminal section; belongs to the transferase hexapeptide repeat family. In terms of assembly, homotrimer. Mg(2+) is required as a cofactor.

It localises to the cytoplasm. It carries out the reaction alpha-D-glucosamine 1-phosphate + acetyl-CoA = N-acetyl-alpha-D-glucosamine 1-phosphate + CoA + H(+). It catalyses the reaction N-acetyl-alpha-D-glucosamine 1-phosphate + UTP + H(+) = UDP-N-acetyl-alpha-D-glucosamine + diphosphate. It functions in the pathway nucleotide-sugar biosynthesis; UDP-N-acetyl-alpha-D-glucosamine biosynthesis; N-acetyl-alpha-D-glucosamine 1-phosphate from alpha-D-glucosamine 6-phosphate (route II): step 2/2. Its pathway is nucleotide-sugar biosynthesis; UDP-N-acetyl-alpha-D-glucosamine biosynthesis; UDP-N-acetyl-alpha-D-glucosamine from N-acetyl-alpha-D-glucosamine 1-phosphate: step 1/1. The protein operates within bacterial outer membrane biogenesis; LPS lipid A biosynthesis. Functionally, catalyzes the last two sequential reactions in the de novo biosynthetic pathway for UDP-N-acetylglucosamine (UDP-GlcNAc). The C-terminal domain catalyzes the transfer of acetyl group from acetyl coenzyme A to glucosamine-1-phosphate (GlcN-1-P) to produce N-acetylglucosamine-1-phosphate (GlcNAc-1-P), which is converted into UDP-GlcNAc by the transfer of uridine 5-monophosphate (from uridine 5-triphosphate), a reaction catalyzed by the N-terminal domain. The polypeptide is Bifunctional protein GlmU (Photorhabdus laumondii subsp. laumondii (strain DSM 15139 / CIP 105565 / TT01) (Photorhabdus luminescens subsp. laumondii)).